We begin with the raw amino-acid sequence, 143 residues long: Probable glycine cleavage system H protein (143 aa).

The Lipoyl-binding domain maps to 36–118 (VATVGITDFA…YGEGWIFKIK (83 aa)). Lys-77 is modified (N6-lipoyllysine).

The protein belongs to the GcvH family. As to quaternary structure, the glycine cleavage system is composed of four proteins: P, T, L and H. The cofactor is (R)-lipoate.

Its function is as follows. The glycine cleavage system catalyzes the degradation of glycine. The H protein shuttles the methylamine group of glycine from the P protein to the T protein. The chain is Probable glycine cleavage system H protein from Aeropyrum pernix (strain ATCC 700893 / DSM 11879 / JCM 9820 / NBRC 100138 / K1).